The following is a 202-amino-acid chain: UPF0301 protein BCG_0069 (202 aa).

The protein belongs to the UPF0301 (AlgH) family.

This is UPF0301 protein BCG_0069 from Mycobacterium bovis (strain BCG / Pasteur 1173P2).